We begin with the raw amino-acid sequence, 154 residues long: Superoxide dismutase [Cu-Zn] 1 (154 aa).

Cu cation is bound by residues His-47, His-49, and His-64. Cysteines 58 and 147 form a disulfide. Zn(2+)-binding residues include His-64, His-72, His-81, and Asp-84. Position 121 (His-121) interacts with Cu cation. Arg-144 is a binding site for substrate.

It belongs to the Cu-Zn superoxide dismutase family. Homodimer. The cofactor is Cu cation. It depends on Zn(2+) as a cofactor.

It is found in the cytoplasm. The catalysed reaction is 2 superoxide + 2 H(+) = H2O2 + O2. Its function is as follows. Destroys radicals which are normally produced within the cells and which are toxic to biological systems. This chain is Superoxide dismutase [Cu-Zn] 1 (SOD1), found in Debaryomyces hansenii (strain ATCC 36239 / CBS 767 / BCRC 21394 / JCM 1990 / NBRC 0083 / IGC 2968) (Yeast).